Reading from the N-terminus, the 682-residue chain is Epithelial sodium channel subunit alpha (682 aa).

The Cytoplasmic segment spans residues 1–111 (MLMRLLPLPS…CSKHNRMKTA (111 aa)). Residues 34–69 (AQGPLPPQPLQGPLKGDKCEQPGLGPEPTAPQQHTE) form a disordered region. Residues 112 to 132 (FWAVLWLCTFGMMYWQFALLF) form a helical membrane-spanning segment. At 133–586 (GEYFSYPVSL…SQWSLWFGSS (454 aa)) the chain is on the extracellular side. Intrachain disulfides connect Cys159-Cys329, Cys253-Cys260, Cys306-Cys313, Cys418-Cys503, Cys440-Cys480, Cys440-Cys499, Cys444-Cys495, Cys453-Cys480, Cys453-Cys503, and Cys455-Cys469. An N-linked (GlcNAc...) asparagine glycan is attached at Asn191. A gating release of inhibition by proteolysis (GRIP); protease-sensitive region that is responsible for the proteolytic activation of the channel region spans residues 201–267 (RSRRSLADTL…SDCFYQTSSS (67 aa)). Positions 221–240 (PEPRRARSSDPSSVRDNNPR) are disordered. An N-linked (GlcNAc...) asparagine glycan is attached at Asn504. The chain crosses the membrane as a helical span at residues 587 to 607 (VLSVVEMAEFMFDLLVITLLM). The Cytoplasmic portion of the chain corresponds to 608–682 (LLRRFRSRYW…SSAACAPREP (75 aa)). Positions 653–657 (PPPAY) match the PY motif; recruits WW domain-containing proteins and is thereby required for ubiquitination and inhibition of the channel by NEDD4 and NEDD4L motif.

Belongs to the amiloride-sensitive sodium channel (TC 1.A.6) family. SCNN1A subfamily. Heterotrimer; containing an alpha/SCNN1A, a beta/SCNN1B and a gamma/SCNN1G subunit. Interacts with WWP1 (via WW domains). Interacts with WWP2 (via WW domains); inhibits the channel. Interacts with BPIFA1; the interaction is indirect via SCNN1B and inhibits the proteolytic processing of SCNN1A and SCNN1G and the activation of ENaC. Interacts with the full-length immature form of PCSK9 (pro-PCSK9). Post-translationally, ubiquitinated. Can be ubiquitinated at multiple sites and undergo monoubiquitination and polyubiquitination. Ubiquitination by NEDD4 or NEDD4L inhibits the ENaC channel through endocytosis, intracellular retention and degradation of its individual subunits. In terms of processing, N-glycosylated. ENaC is activated through the proteolytic maturation of its subunits. Furin cleaves the SCNN1A subunit, which results in a stepwise increase in the open probability of the channel due to the release of an inhibitory tract. BPIFA1, which is recruited by the SCNN1B subunit, prevents the proteolytic activation of ENaC.

The protein localises to the apical cell membrane. It localises to the cell projection. It is found in the cilium. Its subcellular location is the cytoplasmic granule. The protein resides in the cytoplasm. The protein localises to the cytoplasmic vesicle. It localises to the secretory vesicle. It is found in the acrosome. Its subcellular location is the flagellum. The enzyme catalyses Na(+)(in) = Na(+)(out). With respect to regulation, originally identified and characterized by its inhibition by the diuretic drug amiloride. This is one of the three pore-forming subunits of the heterotrimeric epithelial sodium channel (ENaC), a critical regulator of sodium balance and fluid homeostasis. ENaC operates in epithelial tissues, where it mediates the electrodiffusion of sodium ions from extracellular fluid through the apical membrane of cells, with water following osmotically. It plays a key role in maintaining sodium homeostasis through electrogenic sodium reabsorption in the kidneys. Additionally, ENaC is essential for airway surface liquid homeostasis, which is crucial for proper mucus clearance. The polypeptide is Epithelial sodium channel subunit alpha (Cavia porcellus (Guinea pig)).